Reading from the N-terminus, the 27-residue chain is Nucleoside diphosphate kinase 2 (27 aa).

Position 3 (Lys-3) interacts with ATP.

The protein belongs to the NDK family. It depends on Mg(2+) as a cofactor.

The catalysed reaction is a 2'-deoxyribonucleoside 5'-diphosphate + ATP = a 2'-deoxyribonucleoside 5'-triphosphate + ADP. It catalyses the reaction a ribonucleoside 5'-diphosphate + ATP = a ribonucleoside 5'-triphosphate + ADP. Major role in the synthesis of nucleoside triphosphates other than ATP. The ATP gamma phosphate is transferred to the NDP beta phosphate via a ping-pong mechanism, using a phosphorylated active-site intermediate. This is Nucleoside diphosphate kinase 2 from Pseudotsuga menziesii (Douglas-fir).